Consider the following 80-residue polypeptide: Exodeoxyribonuclease 7 small subunit (80 aa).

Belongs to the XseB family. Heterooligomer composed of large and small subunits.

The protein resides in the cytoplasm. The enzyme catalyses Exonucleolytic cleavage in either 5'- to 3'- or 3'- to 5'-direction to yield nucleoside 5'-phosphates.. In terms of biological role, bidirectionally degrades single-stranded DNA into large acid-insoluble oligonucleotides, which are then degraded further into small acid-soluble oligonucleotides. This chain is Exodeoxyribonuclease 7 small subunit, found in Edwardsiella ictaluri (strain 93-146).